The sequence spans 553 residues: NAD(P)H-quinone oxidoreductase chain 4 2 (553 aa).

Transmembrane regions (helical) follow at residues 6–26 (FPWL…IPVI), 34–54 (VRWF…YVFL), 87–107 (ISAP…LAAW), 115–135 (LFYF…VAQD), 136–156 (LLLF…LVSI), 169–189 (FLLY…AMAL), 210–230 (ALEL…LAIF), 244–264 (SAPV…YGLI), 276–296 (IYFA…GAFA), 312–332 (VSHM…GISG), 333–353 (AMLQ…LAGV), 376–396 (VFAL…MSGF), 418–438 (VVTV…LLSM), and 487–507 (IFIA…PQLA).

Belongs to the complex I subunit 4 family.

The protein resides in the cellular thylakoid membrane. The catalysed reaction is a plastoquinone + NADH + (n+1) H(+)(in) = a plastoquinol + NAD(+) + n H(+)(out). It catalyses the reaction a plastoquinone + NADPH + (n+1) H(+)(in) = a plastoquinol + NADP(+) + n H(+)(out). In terms of biological role, NDH-1 shuttles electrons from NAD(P)H, via FMN and iron-sulfur (Fe-S) centers, to quinones in the respiratory chain. The immediate electron acceptor for the enzyme in this species is believed to be plastoquinone. Couples the redox reaction to proton translocation (for every two electrons transferred, four hydrogen ions are translocated across the cytoplasmic membrane), and thus conserves the redox energy in a proton gradient. In Microcystis aeruginosa (strain NIES-843 / IAM M-2473), this protein is NAD(P)H-quinone oxidoreductase chain 4 2.